Here is a 305-residue protein sequence, read N- to C-terminus: MSQQNVTKVGLRIDVDTYRGTRLGVPKLLEIFQRHDISASFFFTVGPDNMGRHIWRLLRPAFLKKMLRSKAASLYGWDILIRGTLWPGPIIGKKLAHIIKQADDAGHEIGLHAWDHHKWQMKTDVMTPAELHSEIDKGYQLLSTLTGKPIPCSAVAGWRCTDATLEQKQRFGFRYNSDCRGESIFIPQLGMAPQIPVTLPTYDELVGKDNIDHSNYNAEIIKLVNPDGLNVYTIHAEVEGIVCAQLFEELIIQAKENNIEFVPMIELLDHEDIDWPLDEILNIEIDGREGWLSHQASMINKQKSA.

In terms of domain architecture, NodB homology spans 7–262 (TKVGLRIDVD…QAKENNIEFV (256 aa)).

It belongs to the polysaccharide deacetylase family. ArnD deformylase subfamily.

The enzyme catalyses 4-deoxy-4-formamido-alpha-L-arabinopyranosyl di-trans,octa-cis-undecaprenyl phosphate + H2O = 4-amino-4-deoxy-alpha-L-arabinopyranosyl di-trans,octa-cis-undecaprenyl phosphate + formate. Its pathway is glycolipid biosynthesis; 4-amino-4-deoxy-alpha-L-arabinose undecaprenyl phosphate biosynthesis; 4-amino-4-deoxy-alpha-L-arabinose undecaprenyl phosphate from UDP-4-deoxy-4-formamido-beta-L-arabinose and undecaprenyl phosphate: step 2/2. The protein operates within bacterial outer membrane biogenesis; lipopolysaccharide biosynthesis. Its function is as follows. Catalyzes the deformylation of 4-deoxy-4-formamido-L-arabinose-phosphoundecaprenol to 4-amino-4-deoxy-L-arabinose-phosphoundecaprenol. The modified arabinose is attached to lipid A and is required for resistance to polymyxin and cationic antimicrobial peptides. The polypeptide is Probable 4-deoxy-4-formamido-L-arabinose-phosphoundecaprenol deformylase ArnD (Shewanella sediminis (strain HAW-EB3)).